The chain runs to 65 residues: U11-theraphotoxin-Cg1a (65 aa).

Positions 1–21 (MKTTILLVILGLTLLFALSAA) are cleaved as a signal peptide. Positions 22 to 29 (TELKDEER) are excised as a propeptide. 3 disulfides stabilise this stretch: Cys-31–Cys-45, Cys-38–Cys-50, and Cys-44–Cys-57.

This sequence belongs to the neurotoxin 10 (Hwtx-1) family. 32 (Jztx-16) subfamily. In terms of tissue distribution, expressed by the venom gland.

It localises to the secreted. In terms of biological role, probable ion channel inhibitor. This Chilobrachys guangxiensis (Chinese earth tiger tarantula) protein is U11-theraphotoxin-Cg1a.